Reading from the N-terminus, the 316-residue chain is 4-hydroxy-3-methylbut-2-enyl diphosphate reductase (316 aa).

Residue cysteine 12 participates in [4Fe-4S] cluster binding. Residues histidine 41 and histidine 74 each contribute to the (2E)-4-hydroxy-3-methylbut-2-enyl diphosphate site. Histidine 41 and histidine 74 together coordinate dimethylallyl diphosphate. Isopentenyl diphosphate is bound by residues histidine 41 and histidine 74. Cysteine 96 lines the [4Fe-4S] cluster pocket. Histidine 124 contacts (2E)-4-hydroxy-3-methylbut-2-enyl diphosphate. Histidine 124 lines the dimethylallyl diphosphate pocket. Histidine 124 is a binding site for isopentenyl diphosphate. The active-site Proton donor is glutamate 126. Threonine 168 serves as a coordination point for (2E)-4-hydroxy-3-methylbut-2-enyl diphosphate. Cysteine 198 serves as a coordination point for [4Fe-4S] cluster. Serine 226, serine 227, asparagine 228, and serine 270 together coordinate (2E)-4-hydroxy-3-methylbut-2-enyl diphosphate. Serine 226, serine 227, asparagine 228, and serine 270 together coordinate dimethylallyl diphosphate. Positions 226, 227, 228, and 270 each coordinate isopentenyl diphosphate.

Belongs to the IspH family. The cofactor is [4Fe-4S] cluster.

The enzyme catalyses isopentenyl diphosphate + 2 oxidized [2Fe-2S]-[ferredoxin] + H2O = (2E)-4-hydroxy-3-methylbut-2-enyl diphosphate + 2 reduced [2Fe-2S]-[ferredoxin] + 2 H(+). It carries out the reaction dimethylallyl diphosphate + 2 oxidized [2Fe-2S]-[ferredoxin] + H2O = (2E)-4-hydroxy-3-methylbut-2-enyl diphosphate + 2 reduced [2Fe-2S]-[ferredoxin] + 2 H(+). The protein operates within isoprenoid biosynthesis; dimethylallyl diphosphate biosynthesis; dimethylallyl diphosphate from (2E)-4-hydroxy-3-methylbutenyl diphosphate: step 1/1. It functions in the pathway isoprenoid biosynthesis; isopentenyl diphosphate biosynthesis via DXP pathway; isopentenyl diphosphate from 1-deoxy-D-xylulose 5-phosphate: step 6/6. In terms of biological role, catalyzes the conversion of 1-hydroxy-2-methyl-2-(E)-butenyl 4-diphosphate (HMBPP) into a mixture of isopentenyl diphosphate (IPP) and dimethylallyl diphosphate (DMAPP). Acts in the terminal step of the DOXP/MEP pathway for isoprenoid precursor biosynthesis. The protein is 4-hydroxy-3-methylbut-2-enyl diphosphate reductase of Marinobacter nauticus (strain ATCC 700491 / DSM 11845 / VT8) (Marinobacter aquaeolei).